The following is a 161-amino-acid chain: Large ribosomal subunit protein eL21 (161 aa).

Belongs to the eukaryotic ribosomal protein eL21 family.

The sequence is that of Large ribosomal subunit protein eL21 (rpl-21) from Caenorhabditis elegans.